Consider the following 217-residue polypeptide: MATLLHIDSSVFPSAASASRAVAETFRTAWQEQHPDGTVIYRDLSANPVPHITADAHTAGFADPATHTPGQAAAFAEREKLIAELEQADAVLIGAPMYNYAIPSTLKAWLDNVILMGRTAANENSKVTGTPVTVIASRGGSYAPGTPREPYEYVQNYLKAVLSDALGLELEFIVPELTMAAHNPAMSELVPLAEASRAKAHEDAAAKAKELADRFAA.

Residues S10, 17–19 (SAS), and 137–140 (SRGG) each bind FMN.

The protein belongs to the azoreductase type 1 family. As to quaternary structure, homodimer. FMN serves as cofactor.

It catalyses the reaction 2 a quinone + NADH + H(+) = 2 a 1,4-benzosemiquinone + NAD(+). The catalysed reaction is N,N-dimethyl-1,4-phenylenediamine + anthranilate + 2 NAD(+) = 2-(4-dimethylaminophenyl)diazenylbenzoate + 2 NADH + 2 H(+). In terms of biological role, quinone reductase that provides resistance to thiol-specific stress caused by electrophilic quinones. Also exhibits azoreductase activity. Catalyzes the reductive cleavage of the azo bond in aromatic azo compounds to the corresponding amines. The chain is FMN-dependent NADH:quinone oxidoreductase from Streptomyces avermitilis (strain ATCC 31267 / DSM 46492 / JCM 5070 / NBRC 14893 / NCIMB 12804 / NRRL 8165 / MA-4680).